We begin with the raw amino-acid sequence, 533 residues long: NEDD8-activating enzyme E1 regulatory subunit (533 aa).

Positions 330–343 are interaction with uba3; it reads DMIADSDKFIKLQN.

It belongs to the ubiquitin-activating E1 family. ULA1 subfamily. As to quaternary structure, heterodimer of uba3 and nae1. The complex binds nedd8 and ube2m.

It functions in the pathway protein modification; protein neddylation. Functionally, regulatory subunit of the dimeric uba3-nae1 E1 enzyme. E1 activates nedd8 by first adenylating its C-terminal glycine residue with ATP, thereafter linking this residue to the side chain of the catalytic cysteine, yielding a nedd8-uba3 thioester and free AMP. E1 finally transfers nedd8 to the catalytic cysteine of ube2m. The covalent attachment of nedd8 to target proteins is known as 'neddylation' and the process is involved in the regulation of cell growth, viability and development. This Xenopus laevis (African clawed frog) protein is NEDD8-activating enzyme E1 regulatory subunit (nae1).